The sequence spans 357 residues: Peptide chain release factor 1 (357 aa).

Glutamine 234 bears the N5-methylglutamine mark. The interval 283–313 is disordered; the sequence is SKKQEQRSSNRKQQVGSGDRSERIRTYNFPQ.

It belongs to the prokaryotic/mitochondrial release factor family. In terms of processing, methylated by PrmC. Methylation increases the termination efficiency of RF1.

The protein localises to the cytoplasm. Peptide chain release factor 1 directs the termination of translation in response to the peptide chain termination codons UAG and UAA. This Borrelia garinii subsp. bavariensis (strain ATCC BAA-2496 / DSM 23469 / PBi) (Borreliella bavariensis) protein is Peptide chain release factor 1.